The primary structure comprises 121 residues: MARIAGVDIPNDKRVVISLTYVYGIGLATSKKILAAAGISEDVRVKDLTSDQEDAIRREVDAIKVEGDLRREVNLNIKRLMEIGSYRGIRHRRGLPVRGQNTKNNARTRKGKAVAIAGKKK.

The interval 96-121 (PVRGQNTKNNARTRKGKAVAIAGKKK) is disordered. The span at 106-121 (ARTRKGKAVAIAGKKK) shows a compositional bias: basic residues.

The protein belongs to the universal ribosomal protein uS13 family. In terms of assembly, part of the 30S ribosomal subunit. Forms a loose heterodimer with protein S19. Forms two bridges to the 50S subunit in the 70S ribosome.

In terms of biological role, located at the top of the head of the 30S subunit, it contacts several helices of the 16S rRNA. In the 70S ribosome it contacts the 23S rRNA (bridge B1a) and protein L5 of the 50S subunit (bridge B1b), connecting the 2 subunits; these bridges are implicated in subunit movement. Contacts the tRNAs in the A and P-sites. The chain is Small ribosomal subunit protein uS13 from Streptococcus suis (strain 05ZYH33).